The following is a 130-amino-acid chain: Large ribosomal subunit protein bL12c (130 aa).

The protein belongs to the bacterial ribosomal protein bL12 family. As to quaternary structure, homodimer. Part of the ribosomal stalk of the 50S ribosomal subunit. Forms a multimeric L10(L12)X complex, where L10 forms an elongated spine to which 2 to 4 L12 dimers bind in a sequential fashion. Binds GTP-bound translation factors.

It localises to the plastid. Its function is as follows. Forms part of the ribosomal stalk which helps the ribosome interact with GTP-bound translation factors. Is thus essential for accurate translation. The polypeptide is Large ribosomal subunit protein bL12c (Prototheca wickerhamii).